Here is a 536-residue protein sequence, read N- to C-terminus: CTP synthase (536 aa).

Residues 1–267 form an amidoligase domain region; that stretch reads MSKFVFVTGG…CKETLRCLDL (267 aa). Ser13 is a binding site for CTP. UTP is bound at residue Ser13. Residues 14–19 and Asp71 contribute to the ATP site; that span reads SIGKGI. Mg(2+) contacts are provided by Asp71 and Glu141. CTP-binding positions include 148 to 150, 188 to 193, and Lys224; these read DIE and KTKPTQ. Residues 188–193 and Lys224 contribute to the UTP site; that span reads KTKPTQ. The 243-residue stretch at 292–534 folds into the Glutamine amidotransferase type-1 domain; sequence KVALVGKYIE…IKASREKLEQ (243 aa). Gly354 is a binding site for L-glutamine. The Nucleophile; for glutamine hydrolysis role is filled by Cys381. L-glutamine contacts are provided by residues 382–385, Glu405, and Arg462; that span reads LGMQ. Catalysis depends on residues His507 and Glu509.

Belongs to the CTP synthase family. Homotetramer.

The enzyme catalyses UTP + L-glutamine + ATP + H2O = CTP + L-glutamate + ADP + phosphate + 2 H(+). It carries out the reaction L-glutamine + H2O = L-glutamate + NH4(+). It catalyses the reaction UTP + NH4(+) + ATP = CTP + ADP + phosphate + 2 H(+). It functions in the pathway pyrimidine metabolism; CTP biosynthesis via de novo pathway; CTP from UDP: step 2/2. Allosterically activated by GTP, when glutamine is the substrate; GTP has no effect on the reaction when ammonia is the substrate. The allosteric effector GTP functions by stabilizing the protein conformation that binds the tetrahedral intermediate(s) formed during glutamine hydrolysis. Inhibited by the product CTP, via allosteric rather than competitive inhibition. Catalyzes the ATP-dependent amination of UTP to CTP with either L-glutamine or ammonia as the source of nitrogen. Regulates intracellular CTP levels through interactions with the four ribonucleotide triphosphates. This is CTP synthase from Prochlorococcus marinus (strain MIT 9515).